Here is a 238-residue protein sequence, read N- to C-terminus: Large ribosomal subunit protein uL1 (238 aa).

This sequence belongs to the universal ribosomal protein uL1 family. As to quaternary structure, part of the 50S ribosomal subunit.

Binds directly to 23S rRNA. The L1 stalk is quite mobile in the ribosome, and is involved in E site tRNA release. Functionally, protein L1 is also a translational repressor protein, it controls the translation of the L11 operon by binding to its mRNA. The sequence is that of Large ribosomal subunit protein uL1 from Trichormus variabilis (strain ATCC 29413 / PCC 7937) (Anabaena variabilis).